Consider the following 268-residue polypeptide: MFTDTINKCAANAARIARLSANNPLGFWVSSAMAGAYVGLGIILIFTLGNLLDPSVRPLVMGATFGIALTLVIIAGSELFTGHTMFLTFGVKAGSISHGQMWAILPQTWLGNLVGSVFVAMLYSWGGGSLLPVDTSIVHSVALAKTTAPAMVLFFKGALCNWLVCLAIWMALRTEGAAKFIAIWWCLLAFIASGYEHSIANMTLFALSWFGNHSEAYTLAGIGHNLLWVTLGNTLSGAVFMGLGYWYATPKANRPVADKFNQTETAAG.

At 1–25 (MFTDTINKCAANAARIARLSANNPL) the chain is on the cytoplasmic side. A helical membrane pass occupies residues 26–46 (GFWVSSAMAGAYVGLGIILIF). The Periplasmic portion of the chain corresponds to 47–59 (TLGNLLDPSVRPL). A helical transmembrane segment spans residues 60 to 80 (VMGATFGIALTLVIIAGSELF). Residues 81–112 (TGHTMFLTFGVKAGSISHGQMWAILPQTWLGN) lie on the Cytoplasmic side of the membrane. A helical membrane pass occupies residues 113–133 (LVGSVFVAMLYSWGGGSLLPV). Over 134–151 (DTSIVHSVALAKTTAPAM) the chain is Periplasmic. The chain crosses the membrane as a helical span at residues 152–172 (VLFFKGALCNWLVCLAIWMAL). The Cytoplasmic segment spans residues 173–179 (RTEGAAK). The chain crosses the membrane as a helical span at residues 180-200 (FIAIWWCLLAFIASGYEHSIA). Topologically, residues 201 to 225 (NMTLFALSWFGNHSEAYTLAGIGHN) are periplasmic. The helical transmembrane segment at 226–246 (LLWVTLGNTLSGAVFMGLGYW) threads the bilayer. The Cytoplasmic portion of the chain corresponds to 247-268 (YATPKANRPVADKFNQTETAAG).

It belongs to the FNT transporter (TC 1.A.16) family.

The protein resides in the cell inner membrane. Functionally, catalyzes nitrite uptake and nitrite export across the cytoplasmic membrane. Is up to 10-fold more active than NarK or NarU in nitrite uptake for subsequent reduction in the cytoplasm by the NirB/NirD nitrite reductase. This Escherichia coli (strain K12) protein is Nitrite transporter NirC (nirC).